Consider the following 239-residue polypeptide: MALYRDEAVVLRTAKLGEADRIITLLTRDHGKVRAVAKGVRRTKSRFGARLEPFMRVDLLLGEGRTFDSVRQAESISAYAGGITGDYATYTAASAMCETAADLLPAEHEPAAAQYRLLIAALGALSRHLHDPQAIALSYILRAMSLAGWTIRLDSCVVCGSQDVEFFSASAGGAMCPNDHTPDAVRVPVHVFDQLRALEQGDWPQLDMLQTPDPRCENIVREWAQYYLERPIRSLRLLD.

This sequence belongs to the RecO family.

In terms of biological role, involved in DNA repair and RecF pathway recombination. In Bifidobacterium animalis subsp. lactis (strain AD011), this protein is DNA repair protein RecO.